Reading from the N-terminus, the 436-residue chain is Cyclin-A2-2 (436 aa).

This sequence belongs to the cyclin family. Cyclin AB subfamily. Expressed in roots, stems, leaves, flowers and siliques.

This is Cyclin-A2-2 (CYCA2-2) from Arabidopsis thaliana (Mouse-ear cress).